Reading from the N-terminus, the 234-residue chain is MDVIPTEAIWWRLFLLFTAVGVLAAGTVTAFFIYSLFKYRSSGQALGEDQGTAGRIYRIMVESPVSGKSKYLLFVTGIIVMGLIVATIDETLYLEKSPPVEDALVVMVIGFQFGWQFEYSVGGETVTTLNYLVVPSDTLIEFRVTSRDVFHAFGIPEFKNKIDAIPGILNSMWIKTPDEPGKVYNAYCYELCGIGHSLMVGKVIVVDKEEFYNAYNSGPDVFSEYVNNVISKYK.

The next 2 helical transmembrane spans lie at 13-33 and 72-92; these read LFLL…AFFI and LLFV…DETL. Residues His-151, Cys-188, Cys-192, and His-196 each coordinate Cu cation.

It belongs to the cytochrome c oxidase subunit 2 family.

The protein resides in the cell membrane. This chain is Heme-copper oxidase subunit 2 (aoxA), found in Aeropyrum pernix (strain ATCC 700893 / DSM 11879 / JCM 9820 / NBRC 100138 / K1).